Here is a 199-residue protein sequence, read N- to C-terminus: Guanylate kinase (199 aa).

One can recognise a Guanylate kinase-like domain in the interval 20 to 198 (GKLIILTGPS…ALQAIEVALF (179 aa)). Residue 27–34 (GPSGVGKG) participates in ATP binding.

It belongs to the guanylate kinase family.

Its subcellular location is the cytoplasm. It catalyses the reaction GMP + ATP = GDP + ADP. Its function is as follows. Essential for recycling GMP and indirectly, cGMP. In Nostoc sp. (strain PCC 7120 / SAG 25.82 / UTEX 2576), this protein is Guanylate kinase.